The sequence spans 107 residues: Integration host factor subunit beta (107 aa).

The segment at 56 to 107 (RPSRVGRNPKSGEKVLVPEKHVPHFKPGKELRERVDRNAGEPLKADAADDDL) is disordered. The segment covering 65-107 (KSGEKVLVPEKHVPHFKPGKELRERVDRNAGEPLKADAADDDL) has biased composition (basic and acidic residues).

It belongs to the bacterial histone-like protein family. In terms of assembly, heterodimer of an alpha and a beta chain.

Its function is as follows. This protein is one of the two subunits of integration host factor, a specific DNA-binding protein that functions in genetic recombination as well as in transcriptional and translational control. This chain is Integration host factor subunit beta, found in Paraburkholderia phymatum (strain DSM 17167 / CIP 108236 / LMG 21445 / STM815) (Burkholderia phymatum).